The primary structure comprises 1487 residues: Major viral transcription factor ICP4 homolog (1487 aa).

Disordered regions lie at residues Ala-41 to Gly-295, Leu-310 to Ala-370, and Pro-803 to Arg-1007. Residues Val-66–Glu-75 show a composition bias toward pro residues. Low complexity-rich tracts occupy residues Pro-165–Ser-193 and Asp-201–Ser-213. The segment covering Asp-214–Glu-224 has biased composition (acidic residues). The segment covering Ala-235 to Gly-272 has biased composition (low complexity). Positions Ala-273–Ser-285 are enriched in pro residues. Composition is skewed to low complexity over residues Ser-807–Ser-829, Pro-849–Gln-860, and Ala-867–Gln-877. A compositionally biased stretch (polar residues) spans Thr-878–Arg-893. Basic residues predominate over residues His-920 to Lys-929. Residues Ala-938 to Ala-951 show a composition bias toward low complexity. Over residues Gly-988 to Arg-1007 the composition is skewed to basic and acidic residues.

This sequence belongs to the herpesviridae ICP4 family. Post-translationally, a long stretch of serine residues may be a major site of phosphorylation.

The protein localises to the host nucleus. Functionally, this IE protein is a multifunctional protein capable of migrating to the nucleus, binding to DNA, trans-activating other viral genes, and autoregulating its own synthesis. This chain is Major viral transcription factor ICP4 homolog (IE), found in Equus caballus (Horse).